We begin with the raw amino-acid sequence, 131 residues long: Small ribosomal subunit protein uS8 (131 aa).

This sequence belongs to the universal ribosomal protein uS8 family. In terms of assembly, part of the 30S ribosomal subunit. Contacts proteins S5 and S12.

Functionally, one of the primary rRNA binding proteins, it binds directly to 16S rRNA central domain where it helps coordinate assembly of the platform of the 30S subunit. This Verminephrobacter eiseniae (strain EF01-2) protein is Small ribosomal subunit protein uS8.